The chain runs to 418 residues: Gamma-glutamyl phosphate reductase (418 aa).

It belongs to the gamma-glutamyl phosphate reductase family.

The protein resides in the cytoplasm. It carries out the reaction L-glutamate 5-semialdehyde + phosphate + NADP(+) = L-glutamyl 5-phosphate + NADPH + H(+). The protein operates within amino-acid biosynthesis; L-proline biosynthesis; L-glutamate 5-semialdehyde from L-glutamate: step 2/2. Functionally, catalyzes the NADPH-dependent reduction of L-glutamate 5-phosphate into L-glutamate 5-semialdehyde and phosphate. The product spontaneously undergoes cyclization to form 1-pyrroline-5-carboxylate. This chain is Gamma-glutamyl phosphate reductase, found in Colwellia psychrerythraea (strain 34H / ATCC BAA-681) (Vibrio psychroerythus).